The chain runs to 43 residues: Potassium channel toxin gamma-KTx 4.7 (43 aa).

Disulfide bonds link cysteine 5-cysteine 23, cysteine 11-cysteine 34, cysteine 20-cysteine 39, and cysteine 24-cysteine 41.

Belongs to the ergtoxin family. Gamma-KTx 4 subfamily. As to expression, expressed by the venom gland.

The protein localises to the secreted. Functionally, reversibly blocks Kv11/ERG potassium channels. The protein is Potassium channel toxin gamma-KTx 4.7 of Centruroides limpidus (Mexican scorpion).